Reading from the N-terminus, the 461-residue chain is Fumarate hydratase class II (461 aa).

Substrate contacts are provided by residues 97–99 (SGT), 127–130 (HPND), 137–139 (SSN), and Thr185. His186 (proton donor/acceptor) is an active-site residue. The active site involves Ser316. Substrate contacts are provided by residues Ser317 and 322-324 (KVN).

It belongs to the class-II fumarase/aspartase family. Fumarase subfamily. Homotetramer.

It localises to the cytoplasm. It carries out the reaction (S)-malate = fumarate + H2O. It functions in the pathway carbohydrate metabolism; tricarboxylic acid cycle; (S)-malate from fumarate: step 1/1. In terms of biological role, involved in the TCA cycle. Catalyzes the stereospecific interconversion of fumarate to L-malate. This is Fumarate hydratase class II from Staphylococcus epidermidis (strain ATCC 35984 / DSM 28319 / BCRC 17069 / CCUG 31568 / BM 3577 / RP62A).